The following is a 180-amino-acid chain: Shikimate kinase (180 aa).

15–20 provides a ligand contact to ATP; sequence GAGKTT. Mg(2+) is bound at residue T19. Substrate contacts are provided by D37, R61, and G83. Residue R121 participates in ATP binding. R140 is a binding site for substrate.

It belongs to the shikimate kinase family. Monomer. The cofactor is Mg(2+).

It localises to the cytoplasm. It carries out the reaction shikimate + ATP = 3-phosphoshikimate + ADP + H(+). The protein operates within metabolic intermediate biosynthesis; chorismate biosynthesis; chorismate from D-erythrose 4-phosphate and phosphoenolpyruvate: step 5/7. Catalyzes the specific phosphorylation of the 3-hydroxyl group of shikimic acid using ATP as a cosubstrate. The polypeptide is Shikimate kinase (Psychrobacter sp. (strain PRwf-1)).